The following is a 701-amino-acid chain: Elongation factor G (701 aa).

One can recognise a tr-type G domain in the interval 8–290; that stretch reads SLYRNIGISA…AVVELLPAPT (283 aa). GTP-binding positions include 17-24, 88-92, and 142-145; these read AHIDAGKT, DTPGH, and NKMD.

This sequence belongs to the TRAFAC class translation factor GTPase superfamily. Classic translation factor GTPase family. EF-G/EF-2 subfamily.

The protein resides in the cytoplasm. Functionally, catalyzes the GTP-dependent ribosomal translocation step during translation elongation. During this step, the ribosome changes from the pre-translocational (PRE) to the post-translocational (POST) state as the newly formed A-site-bound peptidyl-tRNA and P-site-bound deacylated tRNA move to the P and E sites, respectively. Catalyzes the coordinated movement of the two tRNA molecules, the mRNA and conformational changes in the ribosome. The chain is Elongation factor G from Neisseria meningitidis serogroup B (strain ATCC BAA-335 / MC58).